The sequence spans 220 residues: Gene 32 protein (220 aa).

The disordered stretch occupies residues Asn184 to Gln205. Residues Gly187–Gly199 are compositionally biased toward gly residues.

The chain is Gene 32 protein (32) from Mycobacterium (Mycobacteriophage L5).